The sequence spans 319 residues: Beta-ketoacyl-[acyl-carrier-protein] synthase III (319 aa).

Catalysis depends on residues cysteine 113 and histidine 246. Residues 247 to 251 are ACP-binding; sequence QANLR. Asparagine 276 is an active-site residue.

It belongs to the thiolase-like superfamily. FabH family. As to quaternary structure, homodimer.

It is found in the cytoplasm. It carries out the reaction malonyl-[ACP] + acetyl-CoA + H(+) = 3-oxobutanoyl-[ACP] + CO2 + CoA. It participates in lipid metabolism; fatty acid biosynthesis. Its function is as follows. Catalyzes the condensation reaction of fatty acid synthesis by the addition to an acyl acceptor of two carbons from malonyl-ACP. Catalyzes the first condensation reaction which initiates fatty acid synthesis and may therefore play a role in governing the total rate of fatty acid production. Possesses both acetoacetyl-ACP synthase and acetyl transacylase activities. Its substrate specificity determines the biosynthesis of branched-chain and/or straight-chain of fatty acids. The sequence is that of Beta-ketoacyl-[acyl-carrier-protein] synthase III from Chromobacterium violaceum (strain ATCC 12472 / DSM 30191 / JCM 1249 / CCUG 213 / NBRC 12614 / NCIMB 9131 / NCTC 9757 / MK).